A 377-amino-acid chain; its full sequence is Succinyl-diaminopimelate desuccinylase (377 aa).

Residue His66 coordinates Zn(2+). Asp68 is an active-site residue. Residue Asp99 participates in Zn(2+) binding. The active-site Proton acceptor is the Glu133. Positions 134, 162, and 348 each coordinate Zn(2+).

This sequence belongs to the peptidase M20A family. DapE subfamily. As to quaternary structure, homodimer. It depends on Zn(2+) as a cofactor. Requires Co(2+) as cofactor.

The enzyme catalyses N-succinyl-(2S,6S)-2,6-diaminopimelate + H2O = (2S,6S)-2,6-diaminopimelate + succinate. It functions in the pathway amino-acid biosynthesis; L-lysine biosynthesis via DAP pathway; LL-2,6-diaminopimelate from (S)-tetrahydrodipicolinate (succinylase route): step 3/3. Functionally, catalyzes the hydrolysis of N-succinyl-L,L-diaminopimelic acid (SDAP), forming succinate and LL-2,6-diaminopimelate (DAP), an intermediate involved in the bacterial biosynthesis of lysine and meso-diaminopimelic acid, an essential component of bacterial cell walls. This Alcanivorax borkumensis (strain ATCC 700651 / DSM 11573 / NCIMB 13689 / SK2) protein is Succinyl-diaminopimelate desuccinylase.